Consider the following 640-residue polypeptide: Acid beta-fructofuranosidase 2, vacuolar (640 aa).

Residues Met-1–Glu-22 are disordered. Over Met-1–Lys-29 the chain is Cytoplasmic. Residues Met-1–Leu-78 constitute a propeptide, removed in mature form. A helical membrane pass occupies residues Gly-30–Ile-49. At His-50 to Ser-616 the chain is on the lumenal side. Substrate-binding positions include Trp-93 to Asp-96, Gln-112, Trp-120, Trp-155 to Thr-156, Arg-219 to Asp-220, Glu-274, and Asp-307. Asp-96 is a catalytic residue. A disulfide bridge links Cys-464 with Cys-512. Residues Phe-617 to Val-639 form a helical membrane-spanning segment. Arg-640 is a topological domain (cytoplasmic).

The protein belongs to the glycosyl hydrolase 32 family. As to expression, expressed in buds, stems, roots and leaves.

Its subcellular location is the membrane. The protein localises to the vacuole membrane. The catalysed reaction is Hydrolysis of terminal non-reducing beta-D-fructofuranoside residues in beta-D-fructofuranosides.. Vacuolar invertase. This is Acid beta-fructofuranosidase 2, vacuolar from Rosa hybrid cultivar.